The sequence spans 315 residues: Methenyltetrahydromethanopterin cyclohydrolase (315 aa).

This sequence belongs to the MCH family.

The protein localises to the cytoplasm. It catalyses the reaction 5,10-methenyl-5,6,7,8-tetrahydromethanopterin + H2O = N(5)-formyl-5,6,7,8-tetrahydromethanopterin + H(+). It functions in the pathway one-carbon metabolism; methanogenesis from CO(2); 5,10-methenyl-5,6,7,8-tetrahydromethanopterin from CO(2): step 3/3. In terms of biological role, catalyzes the reversible interconversion of 5-formyl-H(4)MPT to methenyl-H(4)MPT(+). The polypeptide is Methenyltetrahydromethanopterin cyclohydrolase (Methanospirillum hungatei JF-1 (strain ATCC 27890 / DSM 864 / NBRC 100397 / JF-1)).